The sequence spans 1197 residues: PAN2-PAN3 deadenylation complex catalytic subunit PAN2 (1197 aa).

WD repeat units lie at residues D153–T193, E195–E231, V244–P280, and T328–T367. The segment at Y368 to Y485 is linker. The USP domain occupies M486–R919. The Exonuclease domain maps to V970–Y1142. The a divalent metal cation site is built by D973, E975, D1082, and D1134. The segment at V1176–L1197 is disordered.

It belongs to the peptidase C19 family. PAN2 subfamily. As to quaternary structure, forms a heterotrimer with an asymmetric homodimer of the regulatory subunit PAN3 to form the poly(A)-nuclease (PAN) deadenylation complex. Requires a divalent metal cation as cofactor.

It is found in the cytoplasm. It localises to the P-body. The protein localises to the nucleus. It carries out the reaction Exonucleolytic cleavage of poly(A) to 5'-AMP.. With respect to regulation, positively regulated by the regulatory subunit PAN3. Catalytic subunit of the poly(A)-nuclease (PAN) deadenylation complex, one of two cytoplasmic mRNA deadenylases involved in general and miRNA-mediated mRNA turnover. PAN specifically shortens poly(A) tails of RNA and the activity is stimulated by poly(A)-binding protein (PABP). PAN deadenylation is followed by rapid degradation of the shortened mRNA tails by the CCR4-NOT complex. Deadenylated mRNAs are then degraded by two alternative mechanisms, namely exosome-mediated 3'-5' exonucleolytic degradation, or deadenylation-dependent mRNA decaping and subsequent 5'-3' exonucleolytic degradation by XRN1. The sequence is that of PAN2-PAN3 deadenylation complex catalytic subunit PAN2 from Gallus gallus (Chicken).